We begin with the raw amino-acid sequence, 305 residues long: Sulfate adenylyltransferase subunit 2 (305 aa).

It belongs to the PAPS reductase family. CysD subfamily. In terms of assembly, heterodimer composed of CysD, the smaller subunit, and CysN.

The enzyme catalyses sulfate + ATP + H(+) = adenosine 5'-phosphosulfate + diphosphate. The protein operates within sulfur metabolism; hydrogen sulfide biosynthesis; sulfite from sulfate: step 1/3. Functionally, with CysN forms the ATP sulfurylase (ATPS) that catalyzes the adenylation of sulfate producing adenosine 5'-phosphosulfate (APS) and diphosphate, the first enzymatic step in sulfur assimilation pathway. APS synthesis involves the formation of a high-energy phosphoric-sulfuric acid anhydride bond driven by GTP hydrolysis by CysN coupled to ATP hydrolysis by CysD. The polypeptide is Sulfate adenylyltransferase subunit 2 (Myxococcus xanthus (strain DK1622)).